We begin with the raw amino-acid sequence, 402 residues long: MLKPQTPRARRAAHPNSHMASSSSSSSLCRLLIPRPTTRRFSGGGGEGGMAAAAPVKREVKPEAGEGWGGGDLGVVPPPPRPMEGLGEAGPAPFVAKTYEMVADAATDAVVSWGPGGSGASFVVWDPHALAAGVLPRFFKHANFSSFVRQLNTYGFRKVTPDRWEFANEAFLAGQKHLLKNIKRRRVSKPLVDSQLRNKASVVFGQPEAPGEVVSLKRDRAALRAEVIMLKQQYNACKSQLIAMEEMVRNIERRQQQTIGFFAKVLTNPAFVQQVLLNYVNKNGLRGAAKRQRLMENEEQHADSPLNKGMEAASVMEADVSPGSTGCGTVGKVETTPMCNFQNIENMCDDVWEELDALPETGMEQEEKAGIGSFDVEEFVGRPCGWVDDCPYLVEPMQFVEH.

The interval 1-28 is disordered; it reads MLKPQTPRARRAAHPNSHMASSSSSSSL. Residues 212 to 258 adopt a coiled-coil conformation; the sequence is EVVSLKRDRAALRAEVIMLKQQYNACKSQLIAMEEMVRNIERRQQQT. Positions 216 to 266 are hydrophobic repeat HR-A/B; it reads LKRDRAALRAEVIMLKQQYNACKSQLIAMEEMVRNIERRQQQTIGFFAKVL. The Nuclear localization signal motif lies at 290–293; the sequence is KRQR. An AHA motif is present at residues 349-358; sequence DDVWEELDAL.

This sequence belongs to the HSF family. Class A subfamily. Homotrimer. Post-translationally, exhibits temperature-dependent phosphorylation.

It localises to the nucleus. In terms of biological role, transcriptional regulator that specifically binds DNA of heat shock promoter elements (HSE). This is Heat stress transcription factor A-6a (HSFA6B) from Oryza sativa subsp. japonica (Rice).